Reading from the N-terminus, the 185-residue chain is Ribosome-recycling factor (185 aa).

This sequence belongs to the RRF family.

The protein localises to the cytoplasm. In terms of biological role, responsible for the release of ribosomes from messenger RNA at the termination of protein biosynthesis. May increase the efficiency of translation by recycling ribosomes from one round of translation to another. The chain is Ribosome-recycling factor from Proteus mirabilis (strain HI4320).